The sequence spans 677 residues: Pannexin-2 (677 aa).

Over 11–47 (MATALLAGEKLRELILPGAQDDKAGALAALLLQLKLE) the chain is Cytoplasmic. A helical membrane pass occupies residues 48–70 (LPFDRVVTIGTVLVPILLVTLVF). Over 71 to 123 (TKNFAEEPIYCYTPHNFTRDQALYARGYCWTELRDALPGVDASLWPSLFEHKF) the chain is Extracellular. An N-linked (GlcNAc...) asparagine glycan is attached at Asn-86. A helical transmembrane segment spans residues 124–146 (LPYALLAFAAIMYVPALGWEFLA). The Cytoplasmic portion of the chain corresponds to 147 to 226 (STRLTSELNF…RGRSNFLAKL (80 aa)). Residues 227 to 249 (YLARHVLILLLSAVPISYLCTYY) traverse the membrane as a helical segment. Residues 250–292 (ATQKQNEFTCALGASPDGAAGAGPAVRVSCKLPSVQLQRIIAG) are Extracellular-facing. The helical transmembrane segment at 293 to 315 (VDIVLLCVMNLIILVNLIHLFIF) threads the bilayer. The Cytoplasmic portion of the chain corresponds to 316 to 643 (RKSNFIFDKL…AREEEDGGPR (328 aa)). Disordered regions lie at residues 393–423 (ATPT…PPVV) and 454–510 (NSKA…KKHA). Positions 492–504 (GPGPAPAPAPPPA) are enriched in pro residues. Residue Ser-593 is modified to Phosphoserine.

The protein belongs to the pannexin family. Homoheptameric. S-palmitoylated in neural stem and progenitor cells. In terms of processing, cleaved by CASP3 and CASP7 during apoptosis. Cleavage has no effect on it function.

It localises to the cell membrane. The protein localises to the golgi apparatus membrane. Its subcellular location is the endoplasmic reticulum membrane. The catalysed reaction is ATP(in) = ATP(out). It carries out the reaction chloride(in) = chloride(out). The enzyme catalyses iodide(out) = iodide(in). It catalyses the reaction Na(+)(in) = Na(+)(out). The catalysed reaction is D-gluconate(in) = D-gluconate(out). Functionally, ion channel with a slight anion preference. Also able to release ATP. Plays a role in regulating neurogenesis and apoptosis in keratinocytes. This Homo sapiens (Human) protein is Pannexin-2.